Consider the following 235-residue polypeptide: tRNA pseudouridine synthase B (235 aa).

Residue aspartate 48 is the Nucleophile of the active site.

The protein belongs to the pseudouridine synthase TruB family. Type 1 subfamily.

It carries out the reaction uridine(55) in tRNA = pseudouridine(55) in tRNA. Functionally, responsible for synthesis of pseudouridine from uracil-55 in the psi GC loop of transfer RNAs. The sequence is that of tRNA pseudouridine synthase B from Phocaeicola vulgatus (strain ATCC 8482 / DSM 1447 / JCM 5826 / CCUG 4940 / NBRC 14291 / NCTC 11154) (Bacteroides vulgatus).